We begin with the raw amino-acid sequence, 562 residues long: Matrix metalloproteinase-25 (562 aa).

The first 21 residues, 1–21 (MRLRLRLLALLLLLLAPPARA), serve as a signal peptide directing secretion. The propeptide occupies 22–107 (PKPSAQDVSL…VAGLVRRRRR (86 aa)). The Cysteine switch motif lies at 88–95 (PRCSLPDV). The Zn(2+) site is built by Cys90 and His233. The active site involves Glu234. Residues His237 and His243 each contribute to the Zn(2+) site. The tract at residues 278–313 (LYGKAPQTPYDKPTRKPLAPPPQPPASPTHSPSFPI) is disordered. A compositionally biased stretch (pro residues) spans 295–304 (LAPPPQPPAS). Hemopexin repeat units follow at residues 314–363 (PDRC…WEGL), 367–412 (VRVV…GLPP), 413–461 (GEEV…EGAP), and 462–508 (PSPD…WLDC). The cysteines at positions 317 and 508 are disulfide-linked. The segment at 490-526 (SIKTEPDAPQPMGPNWLDCPAPSSGPRAPRPPKATPV) is disordered. Ala539 carries the GPI-anchor amidated alanine lipid modification. Residues 540–562 (AGRWPAPIPLLLLPLLVGGVASR) constitute a propeptide, removed in mature form.

The protein belongs to the peptidase M10A family. Zn(2+) serves as cofactor. The cofactor is Ca(2+). The precursor is cleaved by a furin endopeptidase. As to expression, expressed predominantly in leukocytes, lung and spleen. Expressed also in colon carcinoma, astrocytoma and glioblastomas.

The protein localises to the cell membrane. It is found in the secreted. It localises to the extracellular space. The protein resides in the extracellular matrix. May activate progelatinase A. This chain is Matrix metalloproteinase-25 (MMP25), found in Homo sapiens (Human).